The primary structure comprises 194 residues: Large ribosomal subunit protein uL22 (194 aa).

The protein belongs to the universal ribosomal protein uL22 family.

This is Large ribosomal subunit protein uL22 (rpl17) from Aspergillus fumigatus (strain ATCC MYA-4609 / CBS 101355 / FGSC A1100 / Af293) (Neosartorya fumigata).